The sequence spans 299 residues: tRNA dimethylallyltransferase (299 aa).

13–20 is a binding site for ATP; it reads GPTASGKT. 15–20 is a binding site for substrate; it reads TASGKT. Positions 38 to 41 are interaction with substrate tRNA; that stretch reads DSRQ.

This sequence belongs to the IPP transferase family. As to quaternary structure, monomer. The cofactor is Mg(2+).

The catalysed reaction is adenosine(37) in tRNA + dimethylallyl diphosphate = N(6)-dimethylallyladenosine(37) in tRNA + diphosphate. Catalyzes the transfer of a dimethylallyl group onto the adenine at position 37 in tRNAs that read codons beginning with uridine, leading to the formation of N6-(dimethylallyl)adenosine (i(6)A). This Prochlorococcus marinus subsp. pastoris (strain CCMP1986 / NIES-2087 / MED4) protein is tRNA dimethylallyltransferase.